Reading from the N-terminus, the 425-residue chain is Adenylosuccinate synthetase (425 aa).

GTP-binding positions include 12–18 (GDEGKAK) and 40–42 (GHT). Asp-13 serves as the catalytic Proton acceptor. Residues Asp-13 and Gly-40 each contribute to the Mg(2+) site. IMP-binding positions include 13–16 (DEGK), 38–41 (NAGH), Thr-130, Arg-144, Gln-224, Thr-239, and Arg-303. The active-site Proton donor is His-41. Substrate is bound at residue 299–305 (ATTGRPR). GTP-binding positions include Arg-305, 331–333 (KID), and 411–413 (STG).

This sequence belongs to the adenylosuccinate synthetase family. Homodimer. It depends on Mg(2+) as a cofactor.

Its subcellular location is the cytoplasm. It catalyses the reaction IMP + L-aspartate + GTP = N(6)-(1,2-dicarboxyethyl)-AMP + GDP + phosphate + 2 H(+). The protein operates within purine metabolism; AMP biosynthesis via de novo pathway; AMP from IMP: step 1/2. In terms of biological role, plays an important role in the de novo pathway of purine nucleotide biosynthesis. Catalyzes the first committed step in the biosynthesis of AMP from IMP. The chain is Adenylosuccinate synthetase from Leptospira interrogans serogroup Icterohaemorrhagiae serovar copenhageni (strain Fiocruz L1-130).